The sequence spans 97 residues: YcgL domain-containing protein PA1295 (97 aa).

The YcgL domain occupies 3–87 (RICSVYKSPR…GEEEYIEHLP (85 aa)).

The chain is YcgL domain-containing protein PA1295 from Pseudomonas aeruginosa (strain ATCC 15692 / DSM 22644 / CIP 104116 / JCM 14847 / LMG 12228 / 1C / PRS 101 / PAO1).